Here is a 951-residue protein sequence, read N- to C-terminus: Serine/threonine-protein kinase ATG1 (951 aa).

Residues 22 to 327 enclose the Protein kinase domain; it reads FTINEEIGKG…FPEYFAHPVV (306 aa). Residues 28–36 and Lys-51 each bind ATP; that span reads IGKGSFATV. Asp-165 functions as the Proton acceptor in the catalytic mechanism. Disordered stretches follow at residues 343-375, 387-458, 514-573, and 924-951; these read IITPSRSPEASVARHPSLRERQRENPTPKPVET, EQAP…YDEQ, HIPK…SSPS, and HQSMPPPSSPRHSHSGGTTPTIANTPPH. 2 stretches are compositionally biased toward basic and acidic residues: residues 359-368 and 432-442; these read SLRERQRENP and PRQRDRTERHY. Composition is skewed to polar residues over residues 547-573 and 939-951; these read AQGNTRPDTSSARNSYGSYGKTGSSPS and GGTTPTIANTPPH.

This sequence belongs to the protein kinase superfamily. Ser/Thr protein kinase family. APG1/unc-51/ULK1 subfamily. As to quaternary structure, homodimer. Forms a ternary complex with ATG13 and ATG17.

It is found in the cytoplasm. The protein localises to the preautophagosomal structure membrane. It catalyses the reaction L-seryl-[protein] + ATP = O-phospho-L-seryl-[protein] + ADP + H(+). The enzyme catalyses L-threonyl-[protein] + ATP = O-phospho-L-threonyl-[protein] + ADP + H(+). Serine/threonine protein kinase involved in the cytoplasm to vacuole transport (Cvt) and found to be essential in autophagy, where it is required for the formation of autophagosomes. Involved in the clearance of protein aggregates which cannot be efficiently cleared by the proteasome. Required for selective autophagic degradation of the nucleus (nucleophagy) as well as for mitophagy which contributes to regulate mitochondrial quantity and quality by eliminating the mitochondria to a basal level to fulfill cellular energy requirements and preventing excess ROS production. Also involved in endoplasmic reticulum-specific autophagic process, in selective removal of ER-associated degradation (ERAD) substrates. Plays a key role in ATG9 and ATG23 cycling through the pre-autophagosomal structure and is necessary to promote ATG18 binding to ATG9 through phosphorylation of ATG9. Catalyzes phosphorylation of ATG4, decreasing the interaction between ATG4 and ATG8 and impairing deconjugation of PE-conjugated forms of ATG8. The protein is Serine/threonine-protein kinase ATG1 of Sclerotinia sclerotiorum (strain ATCC 18683 / 1980 / Ss-1) (White mold).